Reading from the N-terminus, the 129-residue chain is UPF0325 protein SG1947 (129 aa).

It belongs to the UPF0325 family.

This Sodalis glossinidius (strain morsitans) protein is UPF0325 protein SG1947.